A 540-amino-acid chain; its full sequence is Chaperonin GroEL 3 (540 aa).

ATP contacts are provided by residues 30-33 (TLGP), Lys-51, 87-91 (DGTTT), Gly-415, 479-481 (NAA), and Asp-495.

Belongs to the chaperonin (HSP60) family. Forms a cylinder of 14 subunits composed of two heptameric rings stacked back-to-back. Interacts with the co-chaperonin GroES.

It localises to the cytoplasm. It catalyses the reaction ATP + H2O + a folded polypeptide = ADP + phosphate + an unfolded polypeptide.. Its function is as follows. Together with its co-chaperonin GroES, plays an essential role in assisting protein folding. The GroEL-GroES system forms a nano-cage that allows encapsulation of the non-native substrate proteins and provides a physical environment optimized to promote and accelerate protein folding. This is Chaperonin GroEL 3 from Burkholderia ambifaria (strain ATCC BAA-244 / DSM 16087 / CCUG 44356 / LMG 19182 / AMMD) (Burkholderia cepacia (strain AMMD)).